We begin with the raw amino-acid sequence, 418 residues long: ADP-ribose glycohydrolase MACROD2 (418 aa).

Positions 57–238 (PEEIQVKNSL…IYKRKLNEFF (182 aa)) constitute a Macro domain. Substrate contacts are provided by residues 75-77 (GDI), 88-90 (AAN), 95-100 (GGGGVD), 183-189 (ISTGIYG), and F222. Residues 238–418 (FPKDGGDDEE…KDTNDDANEA (181 aa)) form a disordered region. Over residues 250-262 (KGDSDEMKEDTEG) the composition is skewed to basic and acidic residues. A compositionally biased stretch (polar residues) spans 295–318 (TGNTQDMTAMSLETNEGNDVSSPA). Positions 321–360 (PLKEGEELSEAKITGEKISVEPKTPEPEDAKMTVEEKSQE) are enriched in basic and acidic residues. Acidic residues predominate over residues 377–389 (ETEDLDGDSEEPS).

The protein belongs to the MacroD-type family. MacroD1/2-like subfamily.

It localises to the nucleus. It catalyses the reaction 2''-O-acetyl-ADP-D-ribose + H2O = ADP-D-ribose + acetate + H(+). The catalysed reaction is 4-O-(ADP-D-ribosyl)-L-aspartyl-[protein] + H2O = L-aspartyl-[protein] + ADP-D-ribose + H(+). The enzyme catalyses 5-O-(ADP-D-ribosyl)-L-glutamyl-[protein] + H2O = L-glutamyl-[protein] + ADP-D-ribose + H(+). It carries out the reaction alpha-NAD(+) + H2O = ADP-D-ribose + nicotinamide + H(+). Its activity is regulated as follows. Subject to product inhibition by ADP-ribose. Removes ADP-ribose from aspartate and glutamate residues in proteins bearing a single ADP-ribose moiety. Inactive towards proteins bearing poly-ADP-ribose. Deacetylates O-acetyl-ADP ribose, a signaling molecule generated by the deacetylation of acetylated lysine residues in histones and other proteins. In Xenopus laevis (African clawed frog), this protein is ADP-ribose glycohydrolase MACROD2.